The sequence spans 144 residues: Large ribosomal subunit protein uL11 (144 aa).

The protein belongs to the universal ribosomal protein uL11 family. In terms of assembly, part of the ribosomal stalk of the 50S ribosomal subunit. Interacts with L10 and the large rRNA to form the base of the stalk. L10 forms an elongated spine to which L12 dimers bind in a sequential fashion forming a multimeric L10(L12)X complex. Post-translationally, one or more lysine residues are methylated.

Functionally, forms part of the ribosomal stalk which helps the ribosome interact with GTP-bound translation factors. This chain is Large ribosomal subunit protein uL11, found in Rhodococcus opacus (strain B4).